The following is a 397-amino-acid chain: 1-deoxy-D-xylulose 5-phosphate reductoisomerase (397 aa).

The NADPH site is built by Ser-10, Gly-11, Ser-12, Ile-13, Ala-36, Arg-37, and Asn-124. Lys-125 is a binding site for 1-deoxy-D-xylulose 5-phosphate. Residue Glu-126 participates in NADPH binding. A Mn(2+)-binding site is contributed by Asp-150. 4 residues coordinate 1-deoxy-D-xylulose 5-phosphate: Ser-151, Glu-152, Ser-186, and His-209. Glu-152 lines the Mn(2+) pocket. Gly-215 contacts NADPH. Residues Ser-222, Asn-227, Lys-228, and Glu-231 each coordinate 1-deoxy-D-xylulose 5-phosphate. Glu-231 contributes to the Mn(2+) binding site.

It belongs to the DXR family. Requires Mg(2+) as cofactor. Mn(2+) serves as cofactor.

The catalysed reaction is 2-C-methyl-D-erythritol 4-phosphate + NADP(+) = 1-deoxy-D-xylulose 5-phosphate + NADPH + H(+). Its pathway is isoprenoid biosynthesis; isopentenyl diphosphate biosynthesis via DXP pathway; isopentenyl diphosphate from 1-deoxy-D-xylulose 5-phosphate: step 1/6. Catalyzes the NADPH-dependent rearrangement and reduction of 1-deoxy-D-xylulose-5-phosphate (DXP) to 2-C-methyl-D-erythritol 4-phosphate (MEP). In Aeromonas hydrophila subsp. hydrophila (strain ATCC 7966 / DSM 30187 / BCRC 13018 / CCUG 14551 / JCM 1027 / KCTC 2358 / NCIMB 9240 / NCTC 8049), this protein is 1-deoxy-D-xylulose 5-phosphate reductoisomerase.